The chain runs to 499 residues: MIKIFTALFFGSLNVISFSPYNFWPASIISIFGLLIITTNCKNLINSAKLGFLWGIGNFFNEIYWIYISINKFFGINLFFSIIIILLLSSYLSLYPTIFVILTKFFFPKINFFLFCVGAPSAWMISEILRSKILTGFPWLEIGYSQINGPLKGLAPIIGVSGISYILIIISGMCVLSFYKKSYYPIIFIIFIITLTYPLNFFKWYSVKEKSTKIALIQGNISQHTYIDNNQIQKNLEQYLKITKKIINSSNIIIWPESAIPCDEISCRNFLLKIDKELKLKKSYLITGIISLKKSNYYNSIITLGGNSPYLDNSKNKYYKYNLVPFGEKLPLKSILNPIFNKLGLSLIDLKKGDFFQNQLKIFDFNIVPSICYEIIFGDRIRKNVKINTDFLLTISNDSWFGDSIGPWQHFNMARMRALETGKNLLRASNNGITAIIGPNGELKSKLPQFVNDFLLEEVFSTMGVTPYVKFGNIPLLFFSIICFIISFFIKIKLIFLKN.

Transmembrane regions (helical) follow at residues F18 to T38, L50 to I70, I82 to L102, F105 to I125, P156 to L176, and S182 to F202. The 245-residue stretch at I217–S461 folds into the CN hydrolase domain. E257 serves as the catalytic Proton acceptor. K320 is an active-site residue. C372 functions as the Nucleophile in the catalytic mechanism. A helical transmembrane segment spans residues L476–F496.

This sequence belongs to the CN hydrolase family. Apolipoprotein N-acyltransferase subfamily.

It localises to the cell membrane. It catalyses the reaction N-terminal S-1,2-diacyl-sn-glyceryl-L-cysteinyl-[lipoprotein] + a glycerophospholipid = N-acyl-S-1,2-diacyl-sn-glyceryl-L-cysteinyl-[lipoprotein] + a 2-acyl-sn-glycero-3-phospholipid + H(+). The protein operates within protein modification; lipoprotein biosynthesis (N-acyl transfer). Its function is as follows. Catalyzes the phospholipid dependent N-acylation of the N-terminal cysteine of apolipoprotein, the last step in lipoprotein maturation. The protein is Apolipoprotein N-acyltransferase of Wigglesworthia glossinidia brevipalpis.